The primary structure comprises 171 residues: UPF0316 protein EAT1b_0871 (171 aa).

The next 3 helical transmembrane spans lie at 4–24, 32–52, and 57–77; these read ILLILLLQLIYVPVLTLRTIM, IAGLFGTLETLIYIFALGIVF, and TVGMIVYAVGFGLGILLGGFV.

The protein belongs to the UPF0316 family.

Its subcellular location is the cell membrane. This Exiguobacterium sp. (strain ATCC BAA-1283 / AT1b) protein is UPF0316 protein EAT1b_0871.